Here is a 428-residue protein sequence, read N- to C-terminus: Trigger factor (428 aa).

Residues 163-248 (GDTVVIDFEG…LHEIKTKQLP (86 aa)) enclose the PPIase FKBP-type domain.

The protein belongs to the FKBP-type PPIase family. Tig subfamily.

The protein localises to the cytoplasm. It carries out the reaction [protein]-peptidylproline (omega=180) = [protein]-peptidylproline (omega=0). In terms of biological role, involved in protein export. Acts as a chaperone by maintaining the newly synthesized protein in an open conformation. Functions as a peptidyl-prolyl cis-trans isomerase. This Anoxybacillus flavithermus (strain DSM 21510 / WK1) protein is Trigger factor.